The chain runs to 66 residues: Large ribosomal subunit protein bL33c (66 aa).

Belongs to the bacterial ribosomal protein bL33 family.

Its subcellular location is the plastid. The protein localises to the chloroplast. This is Large ribosomal subunit protein bL33c from Cicer arietinum (Chickpea).